Consider the following 349-residue polypeptide: Protein-glutamate methylesterase/protein-glutamine glutaminase (349 aa).

One can recognise a Response regulatory domain in the interval 5–122 (KVLVVDDSAF…SLDLYKVKDE (118 aa)). Position 56 is a 4-aspartylphosphate (D56). The CheB-type methylesterase domain maps to 156-349 (ARPQQAIVAI…AAAIVQLIGE (194 aa)). Catalysis depends on residues S168, H195, and D291.

Belongs to the CheB family. In terms of processing, phosphorylated by CheA. Phosphorylation of the N-terminal regulatory domain activates the methylesterase activity.

It is found in the cytoplasm. It catalyses the reaction [protein]-L-glutamate 5-O-methyl ester + H2O = L-glutamyl-[protein] + methanol + H(+). The catalysed reaction is L-glutaminyl-[protein] + H2O = L-glutamyl-[protein] + NH4(+). Its function is as follows. Involved in chemotaxis. Part of a chemotaxis signal transduction system that modulates chemotaxis in response to various stimuli. Catalyzes the demethylation of specific methylglutamate residues introduced into the chemoreceptors (methyl-accepting chemotaxis proteins or MCP) by CheR. Also mediates the irreversible deamidation of specific glutamine residues to glutamic acid. This is Protein-glutamate methylesterase/protein-glutamine glutaminase from Geobacillus kaustophilus (strain HTA426).